A 95-amino-acid chain; its full sequence is Integration host factor subunit beta (95 aa).

The tract at residues 56–76 (RAPRTGRNPKTGTSVDLDGKY) is disordered.

Belongs to the bacterial histone-like protein family. As to quaternary structure, heterodimer of an alpha and a beta chain.

Functionally, this protein is one of the two subunits of integration host factor, a specific DNA-binding protein that functions in genetic recombination as well as in transcriptional and translational control. The sequence is that of Integration host factor subunit beta from Shewanella sediminis (strain HAW-EB3).